The chain runs to 365 residues: MFCCGGADEEPAGPPANQYAAPPNKAGNPNFGGGNRGEPRNPNAPRSGAPAKVLPIEIPSVALDELNRMAGNFGNKALIGEGSYGRVFCGKFKGEAVAIKKLDASSSEEPDSDFTSQLSVVSRLKHDHFVELLGYCLEANNRILIYQFATKGSLHDVLHGRKGVQGAEPGPVLNWNQRVKIAYGAAKGLEFLHEKVQPPIVHRDVRSSNVLLFDDFVAKMADFNLTNASSDTAARLHSTRVLGTFGYHAPEYAMTGQITQKSDVYSFGVVLLELLTGRKPVDHTMPKGQQSLVTWATPRLSEDKVKQCIDPKLNNDFPPKAVAKLAAVAALCVQYEADFRPNMTIVVKALQPLLNSKPAGPESTS.

The segment at 1 to 50 (MFCCGGADEEPAGPPANQYAAPPNKAGNPNFGGGNRGEPRNPNAPRSGAP) is disordered. The Protein kinase domain maps to 73–354 (FGNKALIGEG…IVVKALQPLL (282 aa)). Residues 79–87 (IGEGSYGRV) and Lys100 contribute to the ATP site. Position 146 is a phosphotyrosine (Tyr146). The active-site Proton acceptor is the Asp204. Ser208 and Ser238 each carry phosphoserine. Phosphothreonine occurs at positions 239 and 244. Position 252 is a phosphotyrosine (Tyr252).

This sequence belongs to the protein kinase superfamily. Tyr protein kinase family.

The chain is Probable protein kinase At2g41970 from Arabidopsis thaliana (Mouse-ear cress).